A 907-amino-acid chain; its full sequence is Protein translocase subunit SecA (907 aa).

ATP-binding positions include Gln87, 105 to 109 (GEGKT), and Asp513. Positions 841-853 (EAQRRAQAEEAAR) are enriched in basic and acidic residues. Positions 841-907 (EAQRRAQAEE…KYKQCHGQIN (67 aa)) are disordered. The segment covering 854-865 (RAQAQHASAQSQ) has biased composition (low complexity). Over residues 872 to 887 (EGHHQPVVRDERKVGR) the composition is skewed to basic and acidic residues. Cys891, Cys893, Cys902, and His903 together coordinate Zn(2+).

It belongs to the SecA family. Monomer and homodimer. Part of the essential Sec protein translocation apparatus which comprises SecA, SecYEG and auxiliary proteins SecDF-YajC and YidC. Zn(2+) serves as cofactor.

The protein resides in the cell inner membrane. Its subcellular location is the cytoplasm. The catalysed reaction is ATP + H2O + cellular proteinSide 1 = ADP + phosphate + cellular proteinSide 2.. In terms of biological role, part of the Sec protein translocase complex. Interacts with the SecYEG preprotein conducting channel. Has a central role in coupling the hydrolysis of ATP to the transfer of proteins into and across the cell membrane, serving both as a receptor for the preprotein-SecB complex and as an ATP-driven molecular motor driving the stepwise translocation of polypeptide chains across the membrane. The protein is Protein translocase subunit SecA of Vibrio vulnificus (strain CMCP6).